We begin with the raw amino-acid sequence, 252 residues long: dITP/XTP pyrophosphatase (252 aa).

Thr-7 to Lys-12 is a binding site for substrate. The active-site Proton acceptor is Asp-74. Asp-74 is a binding site for Mg(2+). Substrate is bound by residues Ser-75 and Phe-193–Asp-196. The segment at Pro-201–Glu-224 is disordered. Residues Lys-230 and His-235–Arg-236 each bind substrate.

It belongs to the HAM1 NTPase family. In terms of assembly, homodimer. Mg(2+) is required as a cofactor.

It carries out the reaction XTP + H2O = XMP + diphosphate + H(+). The catalysed reaction is dITP + H2O = dIMP + diphosphate + H(+). It catalyses the reaction ITP + H2O = IMP + diphosphate + H(+). Pyrophosphatase that catalyzes the hydrolysis of nucleoside triphosphates to their monophosphate derivatives, with a high preference for the non-canonical purine nucleotides XTP (xanthosine triphosphate), dITP (deoxyinosine triphosphate) and ITP. Seems to function as a house-cleaning enzyme that removes non-canonical purine nucleotides from the nucleotide pool, thus preventing their incorporation into DNA/RNA and avoiding chromosomal lesions. The polypeptide is dITP/XTP pyrophosphatase (Bifidobacterium longum subsp. infantis (strain ATCC 15697 / DSM 20088 / JCM 1222 / NCTC 11817 / S12)).